Consider the following 307-residue polypeptide: Thiohydrolase apmlB (307 aa).

It belongs to the polyketide transferase af380 family.

Functionally, thiohydrolase; part of the gene cluster that mediates the biosynthesis of phaeospelide A, a fungal polyene macrolide with a 34-membered macrolactone ring and an all-trans conjugated hexaene structure. The HR-PKS ApmlA uses acetyl-CoA and malonyl-CoA as its starter and extender units, respectively, and provides the large carbon framework in phaeospelide via 16 cycles of polyketide chain elongation, which is the largest number identified in fungal iterative PKSs thus far. During round 1, the KR domain reduces beta -ketone to an L-oriented hydroxy group, while during later rounds, it provides hydroxy groups in the D-configuration. The characteristic conjugated hexaene moiety is built during the later rounds (10-15), when the KR and DH domains are at work but ER is off. Phylogenetic analysis of the DH domain suggests that a polyene formation is programmed in the DH domain. Finally, the mature ACP-tethered carbon chain is transferred to the serine residue of the thiohydrolase apmlB, followed by intramolecular macrolactonization, generating phaeospelide A. When one elongation cycle during rounds 7-9 is skipped, phaeospelide B is biosynthesized instead. In Arthrinium phaeospermum (Gymnosporium phaeospermum), this protein is Thiohydrolase apmlB.